Here is a 405-residue protein sequence, read N- to C-terminus: Argininosuccinate synthase (405 aa).

Residues 10–18 and Ala-37 contribute to the ATP site; that span reads AYSGGLDTS. L-citrulline contacts are provided by Tyr-88 and Ser-93. Gly-118 serves as a coordination point for ATP. The L-aspartate site is built by Thr-120, Asn-124, and Asp-125. Asn-124 contributes to the L-citrulline binding site. L-citrulline contacts are provided by Arg-128, Ser-179, Ser-188, Glu-264, and Tyr-276.

The protein belongs to the argininosuccinate synthase family. Type 1 subfamily. Homotetramer.

The protein localises to the cytoplasm. It catalyses the reaction L-citrulline + L-aspartate + ATP = 2-(N(omega)-L-arginino)succinate + AMP + diphosphate + H(+). It functions in the pathway amino-acid biosynthesis; L-arginine biosynthesis; L-arginine from L-ornithine and carbamoyl phosphate: step 2/3. This Pseudomonas savastanoi pv. phaseolicola (strain 1448A / Race 6) (Pseudomonas syringae pv. phaseolicola (strain 1448A / Race 6)) protein is Argininosuccinate synthase.